The chain runs to 94 residues: Putative pterin-4-alpha-carbinolamine dehydratase (94 aa).

This sequence belongs to the pterin-4-alpha-carbinolamine dehydratase family.

The enzyme catalyses (4aS,6R)-4a-hydroxy-L-erythro-5,6,7,8-tetrahydrobiopterin = (6R)-L-erythro-6,7-dihydrobiopterin + H2O. The polypeptide is Putative pterin-4-alpha-carbinolamine dehydratase (Caulobacter vibrioides (strain ATCC 19089 / CIP 103742 / CB 15) (Caulobacter crescentus)).